A 577-amino-acid chain; its full sequence is ATP-dependent zinc metalloprotease FtsH (577 aa).

Over 1 to 3 (MKK) the chain is Cytoplasmic. Residues 4–24 (LYWIILIAVVLACSGILMSLH) form a helical membrane-spanning segment. Residues 25 to 98 (LSVTKEEMTY…IKVDNSDSYS (74 aa)) are Extracellular-facing. The chain crosses the membrane as a helical span at residues 99–119 (ATKVIQIILIITVGTGVFLFI). At 120–577 (RTSGGKDKPL…IDRICLKEAV (458 aa)) the chain is on the cytoplasmic side. Residue 186 to 193 (GPPGTGKT) coordinates ATP. Histidine 409 lines the Zn(2+) pocket. Residue glutamate 410 is part of the active site. 2 residues coordinate Zn(2+): histidine 413 and aspartate 487.

This sequence in the central section; belongs to the AAA ATPase family. The protein in the C-terminal section; belongs to the peptidase M41 family. In terms of assembly, homohexamer. Zn(2+) is required as a cofactor.

It is found in the cell membrane. Its function is as follows. Acts as a processive, ATP-dependent zinc metallopeptidase for both cytoplasmic and membrane proteins. Plays a role in the quality control of integral membrane proteins. The polypeptide is ATP-dependent zinc metalloprotease FtsH (Lachnoclostridium phytofermentans (strain ATCC 700394 / DSM 18823 / ISDg) (Clostridium phytofermentans)).